The sequence spans 81 residues: Beta-catenin-interacting protein 1 (81 aa).

Ser59 is modified (phosphoserine).

The protein belongs to the CTNNBIP1 family. Binds CTNNB1.

It localises to the cytoplasm. The protein localises to the nucleus. In terms of biological role, prevents the interaction between CTNNB1 and TCF family members, and acts as a negative regulator of the Wnt signaling pathway. The sequence is that of Beta-catenin-interacting protein 1 (CTNNBIP1) from Homo sapiens (Human).